We begin with the raw amino-acid sequence, 462 residues long: Probable acid phosphatase SPBC4.06 (462 aa).

Histidine 35 acts as the Nucleophile in catalysis. Aspartate 330 (proton donor) is an active-site residue.

The protein belongs to the histidine acid phosphatase family.

It is found in the mitochondrion. The catalysed reaction is a phosphate monoester + H2O = an alcohol + phosphate. The chain is Probable acid phosphatase SPBC4.06 from Schizosaccharomyces pombe (strain 972 / ATCC 24843) (Fission yeast).